Reading from the N-terminus, the 130-residue chain is U-scoloptoxin(16)-Er4a (130 aa).

Residues 1 to 26 (MNTVSVVQFLAVGCAVFVLYGRGVFA) form the signal peptide.

This sequence belongs to the scoloptoxin-16 family. Post-translationally, contains 3 disulfide bonds. As to expression, expressed by the venom gland.

Its subcellular location is the secreted. In Ethmostigmus rubripes (Giant centipede), this protein is U-scoloptoxin(16)-Er4a.